Reading from the N-terminus, the 60-residue chain is Large ribosomal subunit protein bL32 (60 aa).

This sequence belongs to the bacterial ribosomal protein bL32 family.

The chain is Large ribosomal subunit protein bL32 from Streptococcus suis (strain 05ZYH33).